Consider the following 117-residue polypeptide: Ribonuclease P protein component 4 (117 aa).

Positions 64, 67, 93, and 96 each coordinate Zn(2+).

It belongs to the eukaryotic/archaeal RNase P protein component 4 family. In terms of assembly, consists of a catalytic RNA component and at least 4-5 protein subunits. Zn(2+) serves as cofactor.

It localises to the cytoplasm. It carries out the reaction Endonucleolytic cleavage of RNA, removing 5'-extranucleotides from tRNA precursor.. Functionally, part of ribonuclease P, a protein complex that generates mature tRNA molecules by cleaving their 5'-ends. This chain is Ribonuclease P protein component 4, found in Pyrococcus abyssi (strain GE5 / Orsay).